An 815-amino-acid chain; its full sequence is Translation initiation factor IF-2 (815 aa).

The span at 153–176 (VQEKEAEKKVEKLKTADKPKEGNK) shows a compositional bias: basic and acidic residues. The tract at residues 153–219 (VQEKEAEKKV…THLSQKIQAE (67 aa)) is disordered. The segment covering 191-209 (KQLHVARHNPNRRLKKKDR) has biased composition (basic residues). The tr-type G domain occupies 315-482 (ARPPIVTIMG…AISLTAEILE (168 aa)). A G1 region spans residues 324 to 331 (GHVDHGKT). 324 to 331 (GHVDHGKT) serves as a coordination point for GTP. The segment at 349–353 (GITQH) is G2. Residues 370 to 373 (DTPG) form a G3 region. GTP-binding positions include 370-374 (DTPGH) and 424-427 (NKID). The G4 stretch occupies residues 424-427 (NKID). Residues 460-462 (SAH) form a G5 region.

It belongs to the TRAFAC class translation factor GTPase superfamily. Classic translation factor GTPase family. IF-2 subfamily.

It localises to the cytoplasm. One of the essential components for the initiation of protein synthesis. Protects formylmethionyl-tRNA from spontaneous hydrolysis and promotes its binding to the 30S ribosomal subunits. Also involved in the hydrolysis of GTP during the formation of the 70S ribosomal complex. In Vesicomyosocius okutanii subsp. Calyptogena okutanii (strain HA), this protein is Translation initiation factor IF-2.